Consider the following 64-residue polypeptide: Toxin BmKIT3 (64 aa).

One can recognise an LCN-type CS-alpha/beta domain in the interval 1–61; sequence DGYIRGSNGC…TWKSESNTCG (61 aa). Cystine bridges form between cysteine 10–cysteine 60, cysteine 14–cysteine 35, cysteine 21–cysteine 42, and cysteine 25–cysteine 44. Cysteine amide is present on cysteine 60.

The protein belongs to the long (4 C-C) scorpion toxin superfamily. Sodium channel inhibitor family. Beta subfamily. Expressed by the venom gland.

The protein resides in the secreted. Functionally, depressant insect beta-toxins cause a transient contraction paralysis followed by a slow flaccid paralysis. They bind voltage-independently at site-4 of sodium channels (Nav) and shift the voltage of activation toward more negative potentials thereby affecting sodium channel activation and promoting spontaneous and repetitive firing. The protein is Toxin BmKIT3 of Olivierus martensii (Manchurian scorpion).